A 283-amino-acid chain; its full sequence is Gap junction beta-1 protein (283 aa).

Topologically, residues 1-22 (MNWTGLYTLLSGVNRHSTAIGR) are cytoplasmic. Residues 23-45 (VWLSVIFIFRIMVLVVAAESVWG) traverse the membrane as a helical segment. The Extracellular segment spans residues 46 to 75 (DEKSSFICNTLQPGCNSVCYDHFFPISHVR). Residues 76–95 (LWSLQLILVSTPALLVAMHV) traverse the membrane as a helical segment. The Cytoplasmic portion of the chain corresponds to 96–130 (AHQQHIEKKMLRLEGHGDPLHLEEVKRHKVHISGT). Residues 131 to 153 (LWWTYVISVVFRLLFEAVFMYVF) traverse the membrane as a helical segment. Residues 154 to 191 (YLLYPGYAMVRLVKCEAFPCPNTVDCFVSRPTEKTVFT) lie on the Extracellular side of the membrane. A helical membrane pass occupies residues 192–214 (VFMLAASGICIILNVAEVVYLII). Residues 215–283 (RACARRAQRR…AEKSDRCSAC (69 aa)) are Cytoplasmic-facing. S233, S258, S266, and S277 each carry phosphoserine.

This sequence belongs to the connexin family. Beta-type (group I) subfamily. In terms of assembly, a connexon is composed of a hexamer of connexins. Interacts with CNST.

Its subcellular location is the cell membrane. It is found in the cell junction. It localises to the gap junction. Functionally, one gap junction consists of a cluster of closely packed pairs of transmembrane channels, the connexons, through which materials of low MW diffuse from one cell to a neighboring cell. This chain is Gap junction beta-1 protein (Gjb1), found in Mus musculus (Mouse).